A 75-amino-acid chain; its full sequence is RNA-binding protein KhpA (75 aa).

One can recognise a KH domain in the interval Lys-29 to Arg-75.

The protein belongs to the KhpA RNA-binding protein family. In terms of assembly, forms a complex with KhpB.

It localises to the cytoplasm. In terms of biological role, a probable RNA chaperone. Forms a complex with KhpB which binds to cellular RNA and controls its expression. Plays a role in peptidoglycan (PG) homeostasis and cell length regulation. In Thermotoga maritima (strain ATCC 43589 / DSM 3109 / JCM 10099 / NBRC 100826 / MSB8), this protein is RNA-binding protein KhpA.